The chain runs to 462 residues: Protoheme IX farnesyltransferase, mitochondrial (462 aa).

Residues 1–30 (MSYFPRTYAHLMRNVLAHNKGNIYLQIGTQ) constitute a mitochondrion transit peptide. The next 7 membrane-spanning stretches (helical) occupy residues 158–178 (TILV…PASV), 234–254 (LIGT…VAIL), 274–294 (IINT…GWAA), 298–318 (LSHP…FPHF), 352–372 (YSIL…TDWY), 373–393 (YQID…KFYW), and 425–445 (FMAS…HKKG).

The protein belongs to the UbiA prenyltransferase family. Forms ~370 kDa homooligomeric complexes.

The protein localises to the mitochondrion. It localises to the mitochondrion membrane. It catalyses the reaction heme b + (2E,6E)-farnesyl diphosphate + H2O = Fe(II)-heme o + diphosphate. It participates in porphyrin-containing compound metabolism; heme O biosynthesis; heme O from protoheme: step 1/1. Its activity is regulated as follows. Positively regulated by the hydroxylated intermediate (heme I) formed at the subsequent step, or by HAS/COX15 itself. In terms of biological role, catalyzes the first reaction in the biosynthesis of heme A, a prosthetic group of mitochondrial cytochrome c oxidase (CcO). Heme A is synthesized from heme B by two sequential enzymatic reactions catalyzed by heme O synthase (HOS/COX10) and heme A synthase (HAS/COX15). HOS converts heme B (protoheme IX) to heme O by substitution of the vinyl group on carbon 2 of heme B porphyrin ring with a hydroxyethyl farnesyl side group. In Saccharomyces cerevisiae (strain ATCC 204508 / S288c) (Baker's yeast), this protein is Protoheme IX farnesyltransferase, mitochondrial (COX10).